The primary structure comprises 454 residues: C4-dicarboxylate transport protein (454 aa).

A run of 9 helical transmembrane segments spans residues 33-53 (VQVL…PDIG), 66-86 (LVKM…IAGM), 101-121 (IYFL…ANLV), 148-168 (EQSI…GAFA), 170-190 (GDIL…AIVG), 210-230 (LVAI…AFTI), 243-263 (MLIG…LGAV), 354-374 (LLLV…AGFI), and 377-397 (AATL…ILGI).

Belongs to the dicarboxylate/amino acid:cation symporter (DAACS) (TC 2.A.23) family.

It localises to the cell inner membrane. Responsible for the transport of dicarboxylates such as succinate, fumarate, and malate from the periplasm across the membrane. The polypeptide is C4-dicarboxylate transport protein (Sinorhizobium medicae (strain WSM419) (Ensifer medicae)).